The sequence spans 217 residues: Protein GrpE (217 aa).

The segment at 1–63 is disordered; it reads MAETSNSENK…AADSELSLQS (63 aa). Residues 10 to 32 show a composition bias toward basic and acidic residues; sequence KTSEEAKASEKNSRSITLEETKL. The segment covering 37–63 has biased composition (low complexity); it reads SEESTQTTESTQAQAAEAADSELSLQS.

The protein belongs to the GrpE family. In terms of assembly, homodimer.

Its subcellular location is the cytoplasm. Its function is as follows. Participates actively in the response to hyperosmotic and heat shock by preventing the aggregation of stress-denatured proteins, in association with DnaK and GrpE. It is the nucleotide exchange factor for DnaK and may function as a thermosensor. Unfolded proteins bind initially to DnaJ; upon interaction with the DnaJ-bound protein, DnaK hydrolyzes its bound ATP, resulting in the formation of a stable complex. GrpE releases ADP from DnaK; ATP binding to DnaK triggers the release of the substrate protein, thus completing the reaction cycle. Several rounds of ATP-dependent interactions between DnaJ, DnaK and GrpE are required for fully efficient folding. The polypeptide is Protein GrpE (Leptospira borgpetersenii serovar Hardjo-bovis (strain JB197)).